The primary structure comprises 212 residues: Large ribosomal subunit protein uL3 (212 aa).

Gln153 is modified (N5-methylglutamine).

This sequence belongs to the universal ribosomal protein uL3 family. In terms of assembly, part of the 50S ribosomal subunit. Forms a cluster with proteins L14 and L19. Methylated by PrmB.

In terms of biological role, one of the primary rRNA binding proteins, it binds directly near the 3'-end of the 23S rRNA, where it nucleates assembly of the 50S subunit. This is Large ribosomal subunit protein uL3 from Shewanella sediminis (strain HAW-EB3).